Here is a 264-residue protein sequence, read N- to C-terminus: Zinc finger protein CG30 (264 aa).

The segment at 8-63 adopts an RING-type zinc-finger fold; sequence CNICFSVAEIKNYFLQPIDRLTIIPVLELDTCKHQLCSMCIRKIRKRKKVPCPLCR.

The protein localises to the host nucleus. Its function is as follows. Plays a role in the proper expression of late and very late genes. The polypeptide is Zinc finger protein CG30 (CG30) (Autographa californica nuclear polyhedrosis virus (AcMNPV)).